Reading from the N-terminus, the 320-residue chain is Cytochrome c1-1, heme protein, mitochondrial (320 aa).

Residues 1–77 (MSLGKKIRIG…LLSFATIAYS (77 aa)) constitute a mitochondrion transit peptide. Residues 78-280 (DEAEHGLECP…WAAEPEMEER (203 aa)) lie on the Mitochondrial intermembrane side of the membrane. Positions 103–210 (ASIRRGHQVY…NGQNYVFALL (108 aa)) constitute a Cytochrome c domain. 4 residues coordinate heme c: Cys116, Cys119, His120, and Met239. A helical membrane pass occupies residues 281 to 301 (KLMGFKWIFVLSLALLQAAYY). At 302–320 (RRLRWSVLKSRKLVLDVVN) the chain is on the mitochondrial matrix side.

Belongs to the cytochrome c family. As to quaternary structure, component of the ubiquinol-cytochrome c oxidoreductase (cytochrome b-c1 complex, complex III, CIII), a multisubunit enzyme composed of 3 respiratory subunits cytochrome b, cytochrome c1 and Rieske protein, 2 core protein subunits, and additional low-molecular weight protein subunits. The complex exists as an obligatory dimer and forms supercomplexes (SCs) in the inner mitochondrial membrane with cytochrome c oxidase (complex IV, CIV). Requires heme c as cofactor. As to expression, in all tissues analyzed.

It localises to the mitochondrion inner membrane. It carries out the reaction a quinol + 2 Fe(III)-[cytochrome c](out) = a quinone + 2 Fe(II)-[cytochrome c](out) + 2 H(+)(out). In terms of biological role, component of the ubiquinol-cytochrome c oxidoreductase, a multisubunit transmembrane complex that is part of the mitochondrial electron transport chain which drives oxidative phosphorylation. The respiratory chain contains 3 multisubunit complexes succinate dehydrogenase (complex II, CII), ubiquinol-cytochrome c oxidoreductase (cytochrome b-c1 complex, complex III, CIII) and cytochrome c oxidase (complex IV, CIV), that cooperate to transfer electrons derived from NADH and succinate to molecular oxygen, creating an electrochemical gradient over the inner membrane that drives transmembrane transport and the ATP synthase. The cytochrome b-c1 complex catalyzes electron transfer from ubiquinol to cytochrome c, linking this redox reaction to translocation of protons across the mitochondrial inner membrane, with protons being carried across the membrane as hydrogens on the quinol. In the process called Q cycle, 2 protons are consumed from the matrix, 4 protons are released into the intermembrane space and 2 electrons are passed to cytochrome c. Cytochrome c1 is a catalytic core subunit containing a c-type heme. It transfers electrons from the [2Fe-2S] iron-sulfur cluster of the Rieske protein to cytochrome c. This chain is Cytochrome c1-1, heme protein, mitochondrial (CYCL), found in Solanum tuberosum (Potato).